A 177-amino-acid chain; its full sequence is Bifunctional protein PyrR (177 aa).

A PRPP-binding motif is present at residues 98–110 (IILVDDVIYTGRT).

It belongs to the purine/pyrimidine phosphoribosyltransferase family. PyrR subfamily. In terms of assembly, homodimer and homohexamer; in equilibrium.

The catalysed reaction is UMP + diphosphate = 5-phospho-alpha-D-ribose 1-diphosphate + uracil. In terms of biological role, regulates transcriptional attenuation of the pyrimidine nucleotide (pyr) operon by binding in a uridine-dependent manner to specific sites on pyr mRNA. This disrupts an antiterminator hairpin in the RNA and favors formation of a downstream transcription terminator, leading to a reduced expression of downstream genes. Functionally, also displays a weak uracil phosphoribosyltransferase activity which is not physiologically significant. This chain is Bifunctional protein PyrR, found in Clostridium kluyveri (strain ATCC 8527 / DSM 555 / NBRC 12016 / NCIMB 10680 / K1).